A 685-amino-acid chain; its full sequence is Multisite-specific tRNA:(cytosine-C(5))-methyltransferase trm4b (685 aa).

Residues 167–173, aspartate 208, aspartate 235, and aspartate 270 contribute to the S-adenosyl-L-methionine site; that span reads CAAPGSK. The active-site Nucleophile is the cysteine 323.

Belongs to the class I-like SAM-binding methyltransferase superfamily. RsmB/NOP family. TRM4 subfamily.

The protein resides in the nucleus. The enzyme catalyses cytidine(49) in tRNA precursor + S-adenosyl-L-methionine = 5-methylcytidine(49) in tRNA precursor + S-adenosyl-L-homocysteine + H(+). The catalysed reaction is cytidine(50) in tRNA + S-adenosyl-L-methionine = 5-methylcytidine(50) in tRNA + S-adenosyl-L-homocysteine + H(+). It catalyses the reaction cytidine(60) in tRNA(Asp) + S-adenosyl-L-methionine = 5-methylcytidine(60) in tRNA(Asp) + S-adenosyl-L-homocysteine + H(+). It carries out the reaction cytidine(61) in tRNA(Asp) + S-adenosyl-L-methionine = 5-methylcytidine(61) in tRNA(Asp) + S-adenosyl-L-homocysteine + H(+). The enzyme catalyses cytidine(62) in tRNA(Asp) + S-adenosyl-L-methionine = 5-methylcytidine(62) in tRNA(Asp) + S-adenosyl-L-homocysteine + H(+). Its function is as follows. tRNA cytosine C(5)-methyltransferase that methylates cytosine to 5-methylcytosine (m5C) in tRNAs at position 49 and 50. Trm4a and trm4b methylate different sets of tRNAs. Also methylates cytosine to m5C at positions (60, 61 and 62) in tRNA(Asp). The sequence is that of Multisite-specific tRNA:(cytosine-C(5))-methyltransferase trm4b from Schizosaccharomyces pombe (strain 972 / ATCC 24843) (Fission yeast).